A 302-amino-acid chain; its full sequence is Arginase (302 aa).

4 residues coordinate Mn(2+): His103, Asp126, His128, and Asp130. Residues 128-132 (HGDLN), 139-141 (SGN), and Asp180 each bind substrate. Asp229 and Asp231 together coordinate Mn(2+). Residues Thr243 and Glu274 each coordinate substrate.

This sequence belongs to the arginase family. The cofactor is Mn(2+).

It catalyses the reaction L-arginine + H2O = urea + L-ornithine. The protein operates within nitrogen metabolism; urea cycle; L-ornithine and urea from L-arginine: step 1/1. This chain is Arginase (arg), found in Staphylococcus aureus (strain MRSA252).